Reading from the N-terminus, the 497-residue chain is Paired box protein Pax-2-A (497 aa).

The paired DNA-binding region spans 16-142 (GHGGVNQLGG…SSINRIIRTK (127 aa)). The tract at residues 19-75 (GVNQLGGVFVNGRPLPDVVRQRIVELAHQGVRPCDISRQLRVSHGCVSKILGRYYET) is PAI subdomain. The tract at residues 94-142 (KVVDKIAEYKRQNPTMFAWEIRDRLLAEGICDNDTVPSVSSINRIIRTK) is RED subdomain. The disordered stretch occupies residues 143 to 224 (VQQPFHPTPD…GDSQSSVESL (82 aa)). Low complexity predominate over residues 166-178 (VPSTASPPVSSAS).

Expression becomes spatially localized at mid-gastrula stages and is confined to the nervous system (midbrain, hindbrain, spinal cord), sensory organs (optic vesicle and stalk, otic vesicle), visceral arches, developing excretory system (pronephros, pronephric duct, rectal diverticulum, proctodaeum) and thyroid gland. Splicing does not appear to be tissue-specific and tissues displayed the same spectrum of splice variants.

It localises to the nucleus. Probable transcription factor. Involved in kidney development, acting synergistically with lhx1/lim-1 in pronephric morphogenesis during the tailbud stages. The chain is Paired box protein Pax-2-A (pax2-a) from Xenopus laevis (African clawed frog).